The primary structure comprises 402 residues: uncharacterized protein (402 aa).

At 1–12 (MFQQLSASIRHN) the chain is on the cytoplasmic side. The chain crosses the membrane as a helical span at residues 13–33 (AHIIFLCISWYFISSLASQVT). At 34 to 50 (KQVLTVCPLPLFLGEFQ) the chain is on the extracellular side. The helical transmembrane segment at 51–71 (FIYTAVLAWFTCYIAYSFPGF) threads the bilayer. Topologically, residues 72–103 (YRIFPNGTFPEYYIDDRETSRAARKESKLSSL) are cytoplasmic. A helical membrane pass occupies residues 104-124 (IIPPSKPILQTVLPLGLFQFV). Residues 125 to 134 (GKYFGHTATS) are Extracellular-facing. Residues 135-155 (LVPVSTVASIKTLSPMFILLL) traverse the membrane as a helical segment. At 156–165 (QKILKISTLK) the chain is on the cytoplasmic side. A helical membrane pass occupies residues 166 to 186 (ITLTLIFSLCTLVLGVWIIVQ). The Extracellular portion of the chain corresponds to 187–206 (EDNRSPASSNELREFSKYGV). The chain crosses the membrane as a helical span at residues 207–227 (ICAMISMFIFVLQNIYGKTVF). Over 228 to 271 (TYRSQTDESQSNSGFSRQESPLPLYEKLDEKLVAKKKPKSYDKL) the chain is Cytoplasmic. The chain crosses the membrane as a helical span at residues 272-292 (TLMIYISLVGFCLSFGWFITL). At 293 to 353 (EFPVLFRYFF…TYSIANLMKR (61 aa)) the chain is on the extracellular side. A helical transmembrane segment spans residues 354–374 (FAIIAVSWVFIGRRITWLQVF). Residues 375-402 (GLVLNTLGLFLYERCTSQSKIKAKIRPE) are Cytoplasmic-facing.

Belongs to the TPT transporter family.

Its subcellular location is the membrane. This is an uncharacterized protein from Saccharomyces cerevisiae (strain ATCC 204508 / S288c) (Baker's yeast).